Here is a 330-residue protein sequence, read N- to C-terminus: DNA-directed RNA polymerase subunit alpha (330 aa).

The interval 1-229 (MKNIKFIKPF…DHFNVLVELS (229 aa)) is alpha N-terminal domain (alpha-NTD). The alpha C-terminal domain (alpha-CTD) stretch occupies residues 245-330 (AHNSVLDLEI…HSVEEDKDKH (86 aa)).

This sequence belongs to the RNA polymerase alpha chain family. In terms of assembly, homodimer. The RNAP catalytic core consists of 2 alpha, 1 beta, 1 beta' and 1 omega subunit. When a sigma factor is associated with the core the holoenzyme is formed, which can initiate transcription.

It carries out the reaction RNA(n) + a ribonucleoside 5'-triphosphate = RNA(n+1) + diphosphate. Its function is as follows. DNA-dependent RNA polymerase catalyzes the transcription of DNA into RNA using the four ribonucleoside triphosphates as substrates. The polypeptide is DNA-directed RNA polymerase subunit alpha (Onion yellows phytoplasma (strain OY-M)).